We begin with the raw amino-acid sequence, 160 residues long: SsrA-binding protein (160 aa).

Residues Asp-137 to Arg-153 show a composition bias toward basic and acidic residues. Positions Asp-137 to Arg-160 are disordered.

It belongs to the SmpB family.

It is found in the cytoplasm. Functionally, required for rescue of stalled ribosomes mediated by trans-translation. Binds to transfer-messenger RNA (tmRNA), required for stable association of tmRNA with ribosomes. tmRNA and SmpB together mimic tRNA shape, replacing the anticodon stem-loop with SmpB. tmRNA is encoded by the ssrA gene; the 2 termini fold to resemble tRNA(Ala) and it encodes a 'tag peptide', a short internal open reading frame. During trans-translation Ala-aminoacylated tmRNA acts like a tRNA, entering the A-site of stalled ribosomes, displacing the stalled mRNA. The ribosome then switches to translate the ORF on the tmRNA; the nascent peptide is terminated with the 'tag peptide' encoded by the tmRNA and targeted for degradation. The ribosome is freed to recommence translation, which seems to be the essential function of trans-translation. The protein is SsrA-binding protein of Edwardsiella ictaluri (strain 93-146).